Consider the following 276-residue polypeptide: Elongation factor Ts (276 aa).

The segment at 80-83 is involved in Mg(2+) ion dislocation from EF-Tu; the sequence is TDFV.

The protein belongs to the EF-Ts family.

The protein localises to the cytoplasm. Its function is as follows. Associates with the EF-Tu.GDP complex and induces the exchange of GDP to GTP. It remains bound to the aminoacyl-tRNA.EF-Tu.GTP complex up to the GTP hydrolysis stage on the ribosome. The protein is Elongation factor Ts of Kocuria rhizophila (strain ATCC 9341 / DSM 348 / NBRC 103217 / DC2201).